Reading from the N-terminus, the 423-residue chain is Lipoyl synthase 1, mitochondrial (423 aa).

[4Fe-4S] cluster is bound by residues C127, C132, C138, C159, C163, C166, and S375. One can recognise a Radical SAM core domain in the interval 142 to 364 (DEEEGTATAT…EEEAMAMGFL (223 aa)).

The protein belongs to the radical SAM superfamily. Lipoyl synthase family. It depends on [4Fe-4S] cluster as a cofactor.

It is found in the mitochondrion. The catalysed reaction is [[Fe-S] cluster scaffold protein carrying a second [4Fe-4S](2+) cluster] + N(6)-octanoyl-L-lysyl-[protein] + 2 oxidized [2Fe-2S]-[ferredoxin] + 2 S-adenosyl-L-methionine + 4 H(+) = [[Fe-S] cluster scaffold protein] + N(6)-[(R)-dihydrolipoyl]-L-lysyl-[protein] + 4 Fe(3+) + 2 hydrogen sulfide + 2 5'-deoxyadenosine + 2 L-methionine + 2 reduced [2Fe-2S]-[ferredoxin]. Its pathway is protein modification; protein lipoylation via endogenous pathway; protein N(6)-(lipoyl)lysine from octanoyl-[acyl-carrier-protein]: step 2/2. In terms of biological role, catalyzes the radical-mediated insertion of two sulfur atoms into the C-6 and C-8 positions of the octanoyl moiety bound to the lipoyl domains of lipoate-dependent enzymes, thereby converting the octanoylated domains into lipoylated derivatives. This is Lipoyl synthase 1, mitochondrial from Trypanosoma cruzi (strain CL Brener).